A 62-amino-acid chain; its full sequence is Temporin-CDYb (62 aa).

Positions 1–22 are cleaved as a signal peptide; sequence MFTLKKSLLLLFFLGTINLSLC. Residues 23-45 constitute a propeptide that is removed on maturation; that stretch reads EEERDADEEERRDDPEERAVQVE. A Leucine amide modification is found at L60.

This sequence belongs to the frog skin active peptide (FSAP) family. Temporin subfamily. As to expression, expressed by the skin glands.

The protein resides in the secreted. Antimicrobial peptide. Has low activity against the Gram-positive bacterium S.aureus (MIC&gt;100 uM) and the Gram-negative bacterium E.coli (MIC&gt;100 uM). Has weak hemolytic activity against human erythrocytes. The protein is Temporin-CDYb of Rana dybowskii (Dybovsky's frog).